The primary structure comprises 374 residues: Putative glutamate--cysteine ligase 2-1 (374 aa).

It belongs to the glutamate--cysteine ligase type 2 family. YbdK subfamily.

It catalyses the reaction L-cysteine + L-glutamate + ATP = gamma-L-glutamyl-L-cysteine + ADP + phosphate + H(+). Its function is as follows. ATP-dependent carboxylate-amine ligase which exhibits weak glutamate--cysteine ligase activity. In Saccharopolyspora erythraea (strain ATCC 11635 / DSM 40517 / JCM 4748 / NBRC 13426 / NCIMB 8594 / NRRL 2338), this protein is Putative glutamate--cysteine ligase 2-1.